The chain runs to 185 residues: Elongation factor P (185 aa).

Belongs to the elongation factor P family.

Its subcellular location is the cytoplasm. It participates in protein biosynthesis; polypeptide chain elongation. In terms of biological role, involved in peptide bond synthesis. Stimulates efficient translation and peptide-bond synthesis on native or reconstituted 70S ribosomes in vitro. Probably functions indirectly by altering the affinity of the ribosome for aminoacyl-tRNA, thus increasing their reactivity as acceptors for peptidyl transferase. The polypeptide is Elongation factor P (Synechococcus sp. (strain JA-2-3B'a(2-13)) (Cyanobacteria bacterium Yellowstone B-Prime)).